Reading from the N-terminus, the 256-residue chain is Large ribosomal subunit protein eL8y (256 aa).

A compositionally biased stretch (basic residues) spans 1 to 15 (MAPKKGVKVASKKKP). A disordered region spans residues 1-20 (MAPKKGVKVASKKKPEKVTN).

This sequence belongs to the eukaryotic ribosomal protein eL8 family.

In Arabidopsis thaliana (Mouse-ear cress), this protein is Large ribosomal subunit protein eL8y (RPL7AB).